The chain runs to 425 residues: D-amino acid dehydrogenase (425 aa).

3–17 (VLVMGAGVIGVTTAY) serves as a coordination point for FAD.

Belongs to the DadA oxidoreductase family. The cofactor is FAD.

It carries out the reaction a D-alpha-amino acid + A + H2O = a 2-oxocarboxylate + AH2 + NH4(+). It functions in the pathway amino-acid degradation; D-alanine degradation; NH(3) and pyruvate from D-alanine: step 1/1. Oxidative deamination of D-amino acids. In Rhodopseudomonas palustris (strain HaA2), this protein is D-amino acid dehydrogenase.